The following is a 199-amino-acid chain: Probable cobalt-precorrin-6B C(15)-methyltransferase (decarboxylating) (199 aa).

Residues Thr-24, 48–52 (GCGTG), Asp-72, and Ala-101 contribute to the S-adenosyl-L-methionine site.

Belongs to the methyltransferase superfamily. Archaeal-type CbiT family.

It catalyses the reaction Co-precorrin-6B + S-adenosyl-L-methionine = Co-precorrin-7 + S-adenosyl-L-homocysteine + CO2. The protein operates within cofactor biosynthesis; adenosylcobalamin biosynthesis; cob(II)yrinate a,c-diamide from sirohydrochlorin (anaerobic route): step 8/10. Catalyzes the methylation of C-15 in cobalt-precorrin-6B followed by the decarboxylation of C-12 to form cobalt-precorrin-7. This is Probable cobalt-precorrin-6B C(15)-methyltransferase (decarboxylating) from Saccharolobus islandicus (strain Y.N.15.51 / Yellowstone #2) (Sulfolobus islandicus).